Consider the following 636-residue polypeptide: Serine/threonine-protein kinase hal4 (636 aa).

The segment covering 1–11 has biased composition (basic and acidic residues); it reads MGEKDKLHEIS. Disordered stretches follow at residues 1–167 and 181–261; these read MGEK…AGVV and AASP…PSSA. Residues 33–45 are compositionally biased toward pro residues; it reads EPPPPSSQQPPST. 2 stretches are compositionally biased toward polar residues: residues 56-92 and 113-124; these read ALKQ…QQPL and NPSRHVSSTSNK. Residues 140 to 155 are compositionally biased toward low complexity; sequence PSGSVPPSASVSRANS. Over residues 182–226 the composition is skewed to polar residues; sequence ASPNPSTPSNGPAPVSTTATPSRNPVTRLQRIFSQNSVSRQNSRT. Phosphoserine is present on Ser-218. A compositionally biased stretch (low complexity) spans 234 to 261; it reads NTEETNSTGGSETGGAANSSSTSNPSSA. A phosphothreonine mark is found at Thr-238 and Thr-241. Ser-299 carries the phosphoserine modification. One can recognise a Protein kinase domain in the interval 351–623; that stretch reads GRCQEVIGRG…AKQIMKSEWV (273 aa). ATP contacts are provided by residues 357–365 and Lys-385; that span reads IGRGAFGVV. Asp-481 acts as the Proton acceptor in catalysis.

Belongs to the protein kinase superfamily. Ser/Thr protein kinase family. Interacts with sty1.

It is found in the cytoplasm. It carries out the reaction L-seryl-[protein] + ATP = O-phospho-L-seryl-[protein] + ADP + H(+). The enzyme catalyses L-threonyl-[protein] + ATP = O-phospho-L-threonyl-[protein] + ADP + H(+). Functionally, promotes K(+) uptake, by the potassium transporter trk1-trk2, which leads to the subsequent cellular resistance to toxic cations such as Na(+), Li(+) and Ca(2+). This is Serine/threonine-protein kinase hal4 (hal4) from Schizosaccharomyces pombe (strain 972 / ATCC 24843) (Fission yeast).